The primary structure comprises 393 residues: CCCH-type zinc finger protein oma-2 (393 aa).

Residues 1–26 (MDMLKENVIQNNEARTESSVEPSHPD) are disordered. Residues 14–26 (ARTESSVEPSHPD) show a composition bias toward basic and acidic residues. 2 consecutive C3H1-type zinc fingers follow at residues 105–133 (SYKTVICQAWLESKTCAFAENCRFAHGEE) and 147–175 (KYRTKLCDKYTTTGLCPYGKRCLFIHPDN). Disordered stretches follow at residues 227-251 (TPDEPAANMPLGPTPVSIRGPRYEL) and 311-340 (KQSTPGGVSGYSSSGSTPSQDSDSSPLTAA). Low complexity predominate over residues 313–340 (STPGGVSGYSSSGSTPSQDSDSSPLTAA). Thr327 is modified (phosphothreonine; by GSK3).

As to expression, exclusively expressed in the hermaphrodite gonad. Expression only in cellulized oocytes. Widely distributed throughout gonadal oocytes from the mitotic stage to the developing diakinesis stage.

The protein localises to the cytoplasm. Its subcellular location is the cytoplasmic granule. It is found in the cytoskeleton. It localises to the microtubule organizing center. The protein resides in the centrosome. Functionally, zinc-finger RNA-binding protein that binds to 5'-UA[AU]-3' motifs in the 3'-UTR of maternal mRNAs to suppress translation in oocytes and embryos. Acts redundantly with oma-1 to control the temporal expression and distribution of maternal proteins and thereby promote meiotic progression, oocyte maturation, fertilization and embryonic development. Also, together with oma-1, is involved in P-granule distribution during embryonic development. The protein is CCCH-type zinc finger protein oma-2 of Caenorhabditis elegans.